Consider the following 176-residue polypeptide: Adenine phosphoribosyltransferase (176 aa).

It belongs to the purine/pyrimidine phosphoribosyltransferase family. In terms of assembly, homodimer.

It localises to the cytoplasm. The catalysed reaction is AMP + diphosphate = 5-phospho-alpha-D-ribose 1-diphosphate + adenine. It functions in the pathway purine metabolism; AMP biosynthesis via salvage pathway; AMP from adenine: step 1/1. Its function is as follows. Catalyzes a salvage reaction resulting in the formation of AMP, that is energically less costly than de novo synthesis. This Roseobacter denitrificans (strain ATCC 33942 / OCh 114) (Erythrobacter sp. (strain OCh 114)) protein is Adenine phosphoribosyltransferase.